We begin with the raw amino-acid sequence, 351 residues long: Heat-inducible transcription repressor HrcA (351 aa).

Belongs to the HrcA family.

Its function is as follows. Negative regulator of class I heat shock genes (grpE-dnaK-dnaJ and groELS operons). Prevents heat-shock induction of these operons. This is Heat-inducible transcription repressor HrcA from Beutenbergia cavernae (strain ATCC BAA-8 / DSM 12333 / CCUG 43141 / JCM 11478 / NBRC 16432 / NCIMB 13614 / HKI 0122).